The chain runs to 113 residues: UPF0122 protein Sez_1013 (113 aa).

Belongs to the UPF0122 family.

In terms of biological role, might take part in the signal recognition particle (SRP) pathway. This is inferred from the conservation of its genetic proximity to ftsY/ffh. May be a regulatory protein. In Streptococcus equi subsp. zooepidemicus (strain MGCS10565), this protein is UPF0122 protein Sez_1013.